We begin with the raw amino-acid sequence, 950 residues long: Leucine--tRNA ligase (950 aa).

Positions 72 to 83 (PYPSGEGLHVGH) match the 'HIGH' region motif. Residues 722-726 (KIGKS) carry the 'KMSKS' region motif. Residue lysine 725 coordinates ATP.

Belongs to the class-I aminoacyl-tRNA synthetase family.

It is found in the cytoplasm. The catalysed reaction is tRNA(Leu) + L-leucine + ATP = L-leucyl-tRNA(Leu) + AMP + diphosphate. The protein is Leucine--tRNA ligase of Mycobacterium sp. (strain JLS).